Consider the following 628-residue polypeptide: Probable potassium transport system protein Kup (628 aa).

The next 12 helical transmembrane spans lie at 20 to 40 (ALLTLGALGVVFGDIGTSPLY), 63 to 83 (IISMVLWTITLIVTVKYVMLV), 110 to 130 (FVAVAGMLGAALFYGDVVITP), 151 to 171 (FILPISLAVLIAIFAIQPLGT), 178 to 198 (FGPIMLLWFVTLAGLGIPQII), 212 to 232 (ALGLIVAEPFQAFVLLGAVVL), 256 to 276 (WFCVVMPALILTYLGQGALVI), 296 to 316 (IPLVILATIATVIASQAVISG), 346 to 366 (IYMPLVNGLLFVSVMVVVLVF), 375 to 395 (AYGLAVTGTLVLVSVLYLIYV), 398 to 418 (TWWKTALFIVFIGIPEVLLFA), and 422 to 442 (TKIHDGGWLPLLTAAVLIVVM).

It belongs to the HAK/KUP transporter (TC 2.A.72) family.

Its subcellular location is the cell membrane. It catalyses the reaction K(+)(in) + H(+)(in) = K(+)(out) + H(+)(out). Functionally, transport of potassium into the cell. Likely operates as a K(+):H(+) symporter. In Corynebacterium glutamicum (strain R), this protein is Probable potassium transport system protein Kup.